We begin with the raw amino-acid sequence, 21 residues long: thr operon leader peptide (21 aa).

The protein belongs to the thr operon leader peptide family.

In terms of biological role, this protein is involved in control of the biosynthesis of threonine. The chain is thr operon leader peptide from Salmonella choleraesuis (strain SC-B67).